We begin with the raw amino-acid sequence, 366 residues long: 2-aminoethylphosphonate--pyruvate transaminase (366 aa).

Position 194 is an N6-(pyridoxal phosphate)lysine (K194).

It belongs to the class-V pyridoxal-phosphate-dependent aminotransferase family. PhnW subfamily. Homodimer. Pyridoxal 5'-phosphate serves as cofactor.

It catalyses the reaction (2-aminoethyl)phosphonate + pyruvate = phosphonoacetaldehyde + L-alanine. Involved in phosphonate degradation. The protein is 2-aminoethylphosphonate--pyruvate transaminase of Lactiplantibacillus plantarum (strain ATCC BAA-793 / NCIMB 8826 / WCFS1) (Lactobacillus plantarum).